A 278-amino-acid polypeptide reads, in one-letter code: Cation-dependent mannose-6-phosphate receptor (278 aa).

The N-terminal stretch at 1–21 (MFPFSGCWRTELLLLLLLAVA) is a signal peptide. Over 22-186 (VRESWQIEEK…SLACSPEVSH (165 aa)) the chain is Lumenal. In terms of domain architecture, MRH spans 31–182 (KSCDLVGEKD…EMDSSLACSP (152 aa)). The cysteines at positions 33 and 79 are disulfide-linked. 5 N-linked (GlcNAc...) asparagine glycosylation sites follow: N58, N84, N95, N108, and N114. Intrachain disulfides connect C133-C168 and C146-C180. The helical transmembrane segment at 187 to 211 (LSVGSILLVIFASLVAVYIIGGFLY) threads the bilayer. Residues 212–278 (QRLVVGAKGM…EERDDHLLPM (67 aa)) are Cytoplasmic-facing. A disordered region spans residues 257 to 278 (RGVGDDQLGEESEERDDHLLPM). Position 268 is a phosphoserine (S268).

In terms of assembly, homodimer. Binds GGA1, GGA2 and GGA3.

The protein resides in the lysosome membrane. Functionally, transport of phosphorylated lysosomal enzymes from the Golgi complex and the cell surface to lysosomes. Lysosomal enzymes bearing phosphomannosyl residues bind specifically to mannose-6-phosphate receptors in the Golgi apparatus and the resulting receptor-ligand complex is transported to an acidic prelyosomal compartment where the low pH mediates the dissociation of the complex. This Mus musculus (Mouse) protein is Cation-dependent mannose-6-phosphate receptor (M6pr).